The primary structure comprises 374 residues: Fanconi anemia group F protein (374 aa).

Belongs to the multisubunit FA complex composed of FANCA, FANCB, FANCC, FANCE, FANCF, FANCG, FANCL/PHF9 and FANCM. The complex is not found in FA patients. In complex with FANCA, FANCG and FANCL, but not with FANCC, nor FANCE, interacts with HES1; this interaction may be essential for the stability and nuclear localization of FA core complex proteins.

Its subcellular location is the nucleus. In terms of biological role, DNA repair protein that may operate in a postreplication repair or a cell cycle checkpoint function. May be implicated in interstrand DNA cross-link repair and in the maintenance of normal chromosome stability. In Homo sapiens (Human), this protein is Fanconi anemia group F protein (FANCF).